Reading from the N-terminus, the 380-residue chain is Succinyl-diaminopimelate desuccinylase (380 aa).

Histidine 70 is a binding site for Zn(2+). The active site involves aspartate 72. Aspartate 104 serves as a coordination point for Zn(2+). Glutamate 138 (proton acceptor) is an active-site residue. 3 residues coordinate Zn(2+): glutamate 139, glutamate 167, and histidine 353.

Belongs to the peptidase M20A family. DapE subfamily. As to quaternary structure, homodimer. Zn(2+) serves as cofactor. Requires Co(2+) as cofactor.

It carries out the reaction N-succinyl-(2S,6S)-2,6-diaminopimelate + H2O = (2S,6S)-2,6-diaminopimelate + succinate. It participates in amino-acid biosynthesis; L-lysine biosynthesis via DAP pathway; LL-2,6-diaminopimelate from (S)-tetrahydrodipicolinate (succinylase route): step 3/3. In terms of biological role, catalyzes the hydrolysis of N-succinyl-L,L-diaminopimelic acid (SDAP), forming succinate and LL-2,6-diaminopimelate (DAP), an intermediate involved in the bacterial biosynthesis of lysine and meso-diaminopimelic acid, an essential component of bacterial cell walls. This chain is Succinyl-diaminopimelate desuccinylase, found in Ectopseudomonas mendocina (strain ymp) (Pseudomonas mendocina).